A 134-amino-acid polypeptide reads, in one-letter code: Transcriptional activator protein (134 aa).

The Nuclear localization signal signature appears at 17–31 (KVQHRIAKKTTRRRR). Residues 36-53 (CGCSYFVALGCHNHGFTH) fold into a zinc finger. Positions 73-103 (KSPVFQDNQTPRETISEEPRHNHNTSPIQLQ) are disordered. Residues 75-85 (PVFQDNQTPRE) are compositionally biased toward polar residues. Residues 119–134 (NLDSFTSSDLAFLKSI) form a transactivation region.

This sequence belongs to the geminiviridae transcriptional activator protein family. In terms of assembly, monomer. Homodimer. Homooligomer. Self-interaction correlates with nuclear localization and efficient activation of transcription. Monomers suppress local silencing by interacting with and inactivating host adenosine kinase 2 (ADK2) in the cytoplasm. Interacts with and inhibits host SNF1 kinase. Binds to ssDNA. May interact with host RPS27A. Post-translationally, phosphorylated.

It localises to the host nucleus. Its subcellular location is the host cytoplasm. Multifunctional protein that modulates host antiviral defenses and promotes host attractiveness to insect vectors. Acts as a suppressor of RNA-mediated gene silencing, also known as post-transcriptional gene silencing (PTGS), a mechanism of plant viral defense that limits the accumulation of viral RNAs. TrAP suppresses the host RNA silencing by inhibiting adenosine kinase 2 (ADK2), a kinase involved in a general methylation pathway. Also suppresses the host basal defense by interacting with and inhibiting SNF1 kinase, a key regulator of cell metabolism implicated in innate antiviral defense. Its function is as follows. Inhibits signal transduction by the phytohormone jasmonate, making the infected plant more attractive to aphids, which are the second host to play a role as a dissemination vector. Acts by binding to ubiquitin precursor RPS27A, thereby preventing ubiquitin degradation of JAZ. This chain is Transcriptional activator protein, found in Tomato yellow leaf curl China virus (TYLCCNV).